The following is a 519-amino-acid chain: Cyclic AMP-responsive element-binding protein 3-like protein 2 (519 aa).

Over 1–374 (MEIMDSGEPF…SCRVTGTQTS (374 aa)) the chain is Cytoplasmic. Disordered regions lie at residues 58 to 77 (GRGD…PVPP), 85 to 121 (YSLC…MEQE), and 193 to 261 (GLEC…SGPL). Positions 109–119 (ADSESDEWPME) are enriched in acidic residues. Composition is skewed to low complexity over residues 205 to 217 (SSVG…SQSP) and 240 to 249 (PSSLSSSPLL). One can recognise a bZIP domain in the interval 291-354 (ALKKIRRKIK…KSLLQQLHSL (64 aa)). The interval 293–322 (KKIRRKIKNKISAQESRRKKKEYVDALEKK) is basic motif. The interval 333–354 (LRRKVENLECTNKSLLQQLHSL) is leucine-zipper. A helical; Signal-anchor for type II membrane protein transmembrane segment spans residues 375–395 (TCLMVVVLCFSLFLGSFYPGL). At 396-519 (SPCSSITKAD…QLDRTVNETS (124 aa)) the chain is on the lumenal side. The S1P recognition motif lies at 423–426 (RSLL). N-linked (GlcNAc...) asparagine glycosylation is found at Asn485, Asn503, and Asn516.

This sequence belongs to the bZIP family. ATF subfamily. In terms of assembly, binds DNA as a dimer. Upon ER stress, translocated to the Golgi apparatus, where it is processed by regulated intramembrane proteolysis (RIP) to release the cytosol-facing N-terminal transcription factor domain. The cleavage is performed sequentially by site-1 and site-2 proteases (S1P/mbtps1 and S2P/mbtps2).

The protein localises to the endoplasmic reticulum membrane. It localises to the nucleus. In terms of biological role, transcription factor involved in unfolded protein response (UPR). In the absence of endoplasmic reticulum (ER) stress, inserted into ER membranes, with N-terminal DNA-binding and transcription activation domains oriented toward the cytosolic face of the membrane. In response to ER stress, transported to the Golgi, where it is cleaved in a site-specific manner by resident proteases S1P/mbtps1 and S2P/mbtps2. The released N-terminal cytosolic domain is translocated to the nucleus to effect transcription of specific target genes. Plays a critical role in chondrogenesis. May protect neuroblastoma cells from ER stress-induced death. In vitro activates transcription of target genes via direct binding to the CRE site. This Danio rerio (Zebrafish) protein is Cyclic AMP-responsive element-binding protein 3-like protein 2 (creb3l2).